The following is a 254-amino-acid chain: MISDYEGPTPTKKFDQDILFDYSEGEKEFTFELLDSYISSVEEHLPELLNSFEAKDLKGAVLHSHDIKGSSSYIGCEAVRYVSGKIEAYCKNDELEKAESFYPELKKEVEEVFKILSDFKKNWDKNHGEGGSDDGGDDNESEPTENNNNDGSSVNNNDSSSGGGGKDIENKNTDENTGKNLNERSKSPVPLQTTLKPVTIETPKTASDKIATETPTSLANNTNSSSNNNSKNENGLNSKQPQTSSNSPTKIQTK.

The region spanning 26 to 123 is the HPt domain; that stretch reads EKEFTFELLD…KILSDFKKNW (98 aa). Position 65 is a phosphohistidine (histidine 65). The interval 124 to 254 is disordered; the sequence is DKNHGEGGSD…SNSPTKIQTK (131 aa). Positions 131 to 143 are enriched in acidic residues; it reads GSDDGGDDNESEP. Residues 146-160 are compositionally biased toward low complexity; the sequence is NNNNDGSSVNNNDSS. Over residues 166–186 the composition is skewed to basic and acidic residues; the sequence is KDIENKNTDENTGKNLNERSK. Low complexity predominate over residues 220 to 238; sequence NNTNSSSNNNSKNENGLNS. Residues 239–254 show a composition bias toward polar residues; that stretch reads KQPQTSSNSPTKIQTK.

In terms of processing, the phosphorelay mechanism involves the sequential transfer of a phosphate group from 'Asp-212' of pde2 to His-65 of rdeA. In vitro, dephosphorylated by dokA.

It localises to the cytoplasm. Its function is as follows. Phosphorelay protein that supplies phosphate to regA or accepts phosphate from regA; depending on the relative concentration of the phosphodonor proteins. In vitro, acts as a substrate for cheA (bacterial kinase). Plays a role in the development. ypd1 (yeast) can complement rdeA defect. The protein is Phosphorelay intermediate protein rdeA (rdeA) of Dictyostelium discoideum (Social amoeba).